Reading from the N-terminus, the 456-residue chain is Exodeoxyribonuclease 7 large subunit (456 aa).

Belongs to the XseA family. Heterooligomer composed of large and small subunits.

It is found in the cytoplasm. It catalyses the reaction Exonucleolytic cleavage in either 5'- to 3'- or 3'- to 5'-direction to yield nucleoside 5'-phosphates.. Its function is as follows. Bidirectionally degrades single-stranded DNA into large acid-insoluble oligonucleotides, which are then degraded further into small acid-soluble oligonucleotides. This is Exodeoxyribonuclease 7 large subunit from Azotobacter vinelandii (strain DJ / ATCC BAA-1303).